The following is a 220-amino-acid chain: Transcriptional regulatory protein SpaR (220 aa).

Positions 3 to 115 (KILAVDDEKD…ELSARVNAHL (113 aa)) constitute a Response regulatory domain. Asp-51 carries the post-translational modification 4-aspartylphosphate. The ompR/PhoB-type DNA-binding region spans 124-220 (QSKRVISGFL…TVWGVGYKWE (97 aa)).

Post-translationally, phosphorylated by SpaK.

It is found in the cytoplasm. Member of the two-component regulatory system SpaK/SpaR involved in the regulation of the biosynthesis of lantibiotic subtilin. SpaR may function as a regulatory protein. The chain is Transcriptional regulatory protein SpaR (spaR) from Bacillus subtilis.